We begin with the raw amino-acid sequence, 131 residues long: Glycine cleavage system H protein (131 aa).

One can recognise a Lipoyl-binding domain in the interval 24 to 106; that stretch reads RVTVGISDHA…YGEGWIFVVE (83 aa). At Lys65 the chain carries N6-lipoyllysine.

Belongs to the GcvH family. The glycine cleavage system is composed of four proteins: P, T, L and H. Requires (R)-lipoate as cofactor.

Its function is as follows. The glycine cleavage system catalyzes the degradation of glycine. The H protein shuttles the methylamine group of glycine from the P protein to the T protein. This is Glycine cleavage system H protein from Xanthomonas axonopodis pv. citri (strain 306).